The primary structure comprises 353 residues: Homeobox protein Mohawk (353 aa).

A compositionally biased stretch (basic and acidic residues) spans arginine 18–serine 27. Positions arginine 18–proline 50 are disordered. The homeobox; TALE-type DNA-binding region spans valine 71–valine 132. Disordered regions lie at residues leucine 157–tyrosine 183 and methionine 243–aspartate 302.

It belongs to the TALE/IRO homeobox family.

The protein localises to the nucleus. Its function is as follows. May act as a morphogenetic regulator of cell adhesion. Participates in the early events that lead to differentiation. This chain is Homeobox protein Mohawk (Mkx), found in Mus musculus (Mouse).